The chain runs to 545 residues: Chaperonin GroEL (545 aa).

ATP is bound by residues 30-33 (TLGP), Lys51, 87-91 (DGTTT), Gly415, and Asp495.

It belongs to the chaperonin (HSP60) family. Forms a cylinder of 14 subunits composed of two heptameric rings stacked back-to-back. Interacts with the co-chaperonin GroES.

The protein localises to the cytoplasm. The enzyme catalyses ATP + H2O + a folded polypeptide = ADP + phosphate + an unfolded polypeptide.. Functionally, together with its co-chaperonin GroES, plays an essential role in assisting protein folding. The GroEL-GroES system forms a nano-cage that allows encapsulation of the non-native substrate proteins and provides a physical environment optimized to promote and accelerate protein folding. The polypeptide is Chaperonin GroEL (Shewanella oneidensis (strain ATCC 700550 / JCM 31522 / CIP 106686 / LMG 19005 / NCIMB 14063 / MR-1)).